Consider the following 138-residue polypeptide: Hexon-interlacing protein (138 aa).

Residues 100-127 (LLVLLAQLEALTQRLGELSKQVAQLREQ) are a coiled coil.

Belongs to the adenoviridae hexon-interlacing protein family. In terms of assembly, homotrimer. Interacts with hexon protein; this interaction tethers the hexons together. Self-interacts with adjacent proteins. Interacts with kinesin light chain KLC1; this interaction leads to capsid disruption at the nuclear pore complex during virus entry into host cell.

The protein localises to the virion. It is found in the host nucleus. Functionally, structural component of the virion that acts as a cement protein on the capsid exterior and forms triskelion structures consisting of three molecules that stabilize three hexon trimers at the center of each icosahedral facet and fixes the peripentonal hexons. Dispensable for assembly. During virus entry, recruits the anterograde motor kinesin-1 to the capsid docked at the nuclear pore complex thereby subjecting the docked capsid to a pulling force. The resulting tension leads to capsid disruption, dispersion of capsid fragments toward cell periphery and eventually viral DNA entry into the host nucleus. The chain is Hexon-interlacing protein from Human adenovirus B serotype 7 (HAdV-7).